A 188-amino-acid polypeptide reads, in one-letter code: Pyridoxal 5'-phosphate synthase subunit PdxT (188 aa).

47-49 (GES) provides a ligand contact to L-glutamine. Catalysis depends on C79, which acts as the Nucleophile. L-glutamine is bound by residues R105 and 134–135 (IR). Active-site charge relay system residues include H170 and E172.

The protein belongs to the glutaminase PdxT/SNO family. In the presence of PdxS, forms a dodecamer of heterodimers. Only shows activity in the heterodimer.

It catalyses the reaction aldehydo-D-ribose 5-phosphate + D-glyceraldehyde 3-phosphate + L-glutamine = pyridoxal 5'-phosphate + L-glutamate + phosphate + 3 H2O + H(+). The catalysed reaction is L-glutamine + H2O = L-glutamate + NH4(+). It functions in the pathway cofactor biosynthesis; pyridoxal 5'-phosphate biosynthesis. Functionally, catalyzes the hydrolysis of glutamine to glutamate and ammonia as part of the biosynthesis of pyridoxal 5'-phosphate. The resulting ammonia molecule is channeled to the active site of PdxS. This Listeria monocytogenes serotype 4a (strain HCC23) protein is Pyridoxal 5'-phosphate synthase subunit PdxT.